The sequence spans 274 residues: NAD kinase (274 aa).

D59 functions as the Proton acceptor in the catalytic mechanism. Residues 59–60 (DG), 133–134 (ND), R144, D163, 174–179 (TAYALS), and Q233 each bind NAD(+).

The protein belongs to the NAD kinase family. A divalent metal cation is required as a cofactor.

The protein localises to the cytoplasm. The catalysed reaction is NAD(+) + ATP = ADP + NADP(+) + H(+). Its function is as follows. Involved in the regulation of the intracellular balance of NAD and NADP, and is a key enzyme in the biosynthesis of NADP. Catalyzes specifically the phosphorylation on 2'-hydroxyl of the adenosine moiety of NAD to yield NADP. This is NAD kinase from Aquifex aeolicus (strain VF5).